Reading from the N-terminus, the 178-residue chain is Peptidyl-prolyl cis-trans isomerase H (178 aa).

The PPIase cyclophilin-type domain occupies 14-177 (FFDISIGDVP…LPVKITECGQ (164 aa)).

It belongs to the cyclophilin-type PPIase family. PPIase H subfamily.

The protein resides in the nucleus. The enzyme catalyses [protein]-peptidylproline (omega=180) = [protein]-peptidylproline (omega=0). Functionally, PPIases accelerate the folding of proteins. It catalyzes the cis-trans isomerization of proline imidic peptide bonds in oligopeptides. The chain is Peptidyl-prolyl cis-trans isomerase H (cyp7) from Rhizopus delemar (strain RA 99-880 / ATCC MYA-4621 / FGSC 9543 / NRRL 43880) (Mucormycosis agent).